Here is a 624-residue protein sequence, read N- to C-terminus: Chaperone protein DnaK (624 aa).

Thr174 carries the phosphothreonine; by autocatalysis modification. 2 disordered regions span residues Lys544–Ser563 and Asn576–Lys624. The span at Gln581 to Gly600 shows a compositional bias: low complexity. Over residues Ser601–Lys624 the composition is skewed to basic and acidic residues.

This sequence belongs to the heat shock protein 70 family.

Functionally, acts as a chaperone. This chain is Chaperone protein DnaK, found in Lacticaseibacillus casei (strain BL23) (Lactobacillus casei).